A 162-amino-acid chain; its full sequence is Shikimate kinase (162 aa).

11-16 (GSGKSS) is a binding site for ATP. Ser15 contributes to the Mg(2+) binding site. Positions 33, 57, and 80 each coordinate substrate. Arg116 is a binding site for ATP. Arg132 contributes to the substrate binding site.

This sequence belongs to the shikimate kinase family. In terms of assembly, monomer. The cofactor is Mg(2+).

It is found in the cytoplasm. It catalyses the reaction shikimate + ATP = 3-phosphoshikimate + ADP + H(+). It functions in the pathway metabolic intermediate biosynthesis; chorismate biosynthesis; chorismate from D-erythrose 4-phosphate and phosphoenolpyruvate: step 5/7. In terms of biological role, catalyzes the specific phosphorylation of the 3-hydroxyl group of shikimic acid using ATP as a cosubstrate. The protein is Shikimate kinase of Helicobacter pylori (strain HPAG1).